Consider the following 178-residue polypeptide: MSLLDHKFGQGGIVVSQLEDVLNWARLSSLFPMSFGLACCAIEMMQTFTSGYDLDRFGVIPRPSPRQSDVMIVAGTVTFKMADRIRRLYEQMPEPRYVISMGSCSNCGGPYWEHGYHVVKGVDRIVPVDIYVPGCPPRPEALIGGFLKLQEKIRKETLVAPKAVERFLETHAKEKNIA.

The [4Fe-4S] cluster site is built by Cys-39, Cys-40, Cys-104, and Cys-135.

Belongs to the complex I 20 kDa subunit family. NDH-1 is composed of 14 different subunits. Subunits NuoB, C, D, E, F, and G constitute the peripheral sector of the complex. [4Fe-4S] cluster is required as a cofactor.

The protein localises to the cell inner membrane. The enzyme catalyses a quinone + NADH + 5 H(+)(in) = a quinol + NAD(+) + 4 H(+)(out). NDH-1 shuttles electrons from NADH, via FMN and iron-sulfur (Fe-S) centers, to quinones in the respiratory chain. The immediate electron acceptor for the enzyme in this species is believed to be a menaquinone. Couples the redox reaction to proton translocation (for every two electrons transferred, four hydrogen ions are translocated across the cytoplasmic membrane), and thus conserves the redox energy in a proton gradient. This chain is NADH-quinone oxidoreductase subunit B 1, found in Cytophaga hutchinsonii (strain ATCC 33406 / DSM 1761 / CIP 103989 / NBRC 15051 / NCIMB 9469 / D465).